The chain runs to 79 residues: Dolichyl-diphosphooligosaccharide--protein glycosyltransferase subunit TMEM258 (79 aa).

The next 2 membrane-spanning stretches (helical) occupy residues 18–38 (LPLLATVLCGVGLLLLAAFTM) and 55–75 (FIAATSSIFLGFGSVFLLLWV).

Belongs to the OST5 family. In terms of assembly, component of the oligosaccharyltransferase (OST) complex.

The protein localises to the membrane. Its pathway is protein modification; protein glycosylation. Its function is as follows. Subunit of the oligosaccharyl transferase (OST) complex that catalyzes the initial transfer of a defined glycan (Glc(3)Man(9)GlcNAc(2) in eukaryotes) from the lipid carrier dolichol-pyrophosphate to an asparagine residue within an Asn-X-Ser/Thr consensus motif in nascent polypeptide chains, the first step in protein N-glycosylation. N-glycosylation occurs cotranslationally and the complex associates with the Sec61 complex at the channel-forming translocon complex that mediates protein translocation across the endoplasmic reticulum (ER). All subunits are required for a maximal enzyme activity. The sequence is that of Dolichyl-diphosphooligosaccharide--protein glycosyltransferase subunit TMEM258 from Caenorhabditis briggsae.